The chain runs to 286 residues: Deaminated glutathione amidase (286 aa).

A CN hydrolase domain is found at 4 to 252 (ANVALLQLCS…VSALKVKIET (249 aa)). E42 functions as the Proton acceptor in the catalytic mechanism. Residue K115 is part of the active site. Residue C157 is the Nucleophile of the active site.

The protein belongs to the carbon-nitrogen hydrolase superfamily. NIT1/NIT2 family.

It catalyses the reaction N-(4-oxoglutaryl)-L-cysteinylglycine + H2O = L-cysteinylglycine + 2-oxoglutarate. Its function is as follows. Hydrolyzes deaminated glutathione (dGSH, 2-oxoglutaramate) to alpha-ketoglutarate (alpha-KG) and cysteinylglycine (specific activity 6.50 umol/min/mg), has less activity against alpha-ketoglutaramate (a-KGM, specific activity 0.20 umol/min/mg), very little activity on glutathione and none on L-glutamine. May function as a metabolite repair enzyme. This chain is Deaminated glutathione amidase, found in Yersinia enterocolitica.